The sequence spans 322 residues: Cytochrome f (322 aa).

Residues 1–36 (MQKNRNTFSWVKEQMTRCISVSMMIYVITRASISNA) form the signal peptide. Heme-binding residues include tyrosine 37, cysteine 57, cysteine 60, and histidine 61. The chain crosses the membrane as a helical span at residues 288–308 (IQGLLFFLASVILAQIFLVLK).

Belongs to the cytochrome f family. In terms of assembly, the 4 large subunits of the cytochrome b6-f complex are cytochrome b6, subunit IV (17 kDa polypeptide, petD), cytochrome f and the Rieske protein, while the 4 small subunits are PetG, PetL, PetM and PetN. The complex functions as a dimer. Heme serves as cofactor.

The protein localises to the plastid. The protein resides in the chloroplast thylakoid membrane. Functionally, component of the cytochrome b6-f complex, which mediates electron transfer between photosystem II (PSII) and photosystem I (PSI), cyclic electron flow around PSI, and state transitions. The polypeptide is Cytochrome f (Nymphaea alba (White water-lily)).